Reading from the N-terminus, the 439-residue chain is Xylose isomerase (439 aa).

Active-site residues include His-101 and Asp-104. Mg(2+) is bound by residues Glu-232, Glu-268, His-271, Asp-296, Asp-307, Asp-309, and Asp-339.

Belongs to the xylose isomerase family. As to quaternary structure, homotetramer. Requires Mg(2+) as cofactor.

Its subcellular location is the cytoplasm. The catalysed reaction is alpha-D-xylose = alpha-D-xylulofuranose. The sequence is that of Xylose isomerase from Yersinia enterocolitica serotype O:8 / biotype 1B (strain NCTC 13174 / 8081).